The following is a 38-amino-acid chain: Large ribosomal subunit protein bL36 (38 aa).

It belongs to the bacterial ribosomal protein bL36 family.

In Wigglesworthia glossinidia brevipalpis, this protein is Large ribosomal subunit protein bL36.